Reading from the N-terminus, the 215-residue chain is Probable transaldolase (215 aa).

Lysine 83 serves as the catalytic Schiff-base intermediate with substrate.

It belongs to the transaldolase family. Type 3B subfamily.

It is found in the cytoplasm. The enzyme catalyses D-sedoheptulose 7-phosphate + D-glyceraldehyde 3-phosphate = D-erythrose 4-phosphate + beta-D-fructose 6-phosphate. It functions in the pathway carbohydrate degradation; pentose phosphate pathway; D-glyceraldehyde 3-phosphate and beta-D-fructose 6-phosphate from D-ribose 5-phosphate and D-xylulose 5-phosphate (non-oxidative stage): step 2/3. Functionally, transaldolase is important for the balance of metabolites in the pentose-phosphate pathway. The sequence is that of Probable transaldolase from Heliobacterium modesticaldum (strain ATCC 51547 / Ice1).